Consider the following 283-residue polypeptide: Phosphate import ATP-binding protein PstB (283 aa).

The segment covering 1 to 20 (MAQTLAQTKQISQSHTFDVS) has biased composition (polar residues). The segment at 1–33 (MAQTLAQTKQISQSHTFDVSQSHHKTPNDTNSH) is disordered. In terms of domain architecture, ABC transporter spans 37–278 (YSTQNLDLWY…PSNKKTEDYI (242 aa)). An ATP-binding site is contributed by 69–76 (GPSGCGKS).

It belongs to the ABC transporter superfamily. Phosphate importer (TC 3.A.1.7) family. The complex is composed of two ATP-binding proteins (PstB), two transmembrane proteins (PstC and PstA) and a solute-binding protein (PstS).

It localises to the cell membrane. The catalysed reaction is phosphate(out) + ATP + H2O = ADP + 2 phosphate(in) + H(+). Its function is as follows. Part of the ABC transporter complex PstSACB involved in phosphate import. Responsible for energy coupling to the transport system. This chain is Phosphate import ATP-binding protein PstB, found in Staphylococcus aureus (strain bovine RF122 / ET3-1).